The primary structure comprises 466 residues: 3-isopropylmalate dehydratase large subunit (466 aa).

3 residues coordinate [4Fe-4S] cluster: C347, C407, and C410.

This sequence belongs to the aconitase/IPM isomerase family. LeuC type 1 subfamily. Heterodimer of LeuC and LeuD. The cofactor is [4Fe-4S] cluster.

It carries out the reaction (2R,3S)-3-isopropylmalate = (2S)-2-isopropylmalate. It functions in the pathway amino-acid biosynthesis; L-leucine biosynthesis; L-leucine from 3-methyl-2-oxobutanoate: step 2/4. Its function is as follows. Catalyzes the isomerization between 2-isopropylmalate and 3-isopropylmalate, via the formation of 2-isopropylmaleate. The sequence is that of 3-isopropylmalate dehydratase large subunit from Escherichia coli (strain 55989 / EAEC).